Here is a 578-residue protein sequence, read N- to C-terminus: Paraneoplastic antigen Ma6F (578 aa).

Disordered regions lie at residues 106–221 and 441–578; these read AQPQ…AGAA and AAPV…PPGK. Over residues 112-129 the composition is skewed to low complexity; sequence AVARGAGEAGAAGEAGSV. The span at 147 to 159 shows a compositional bias: gly residues; the sequence is GGIGEAGGVGEAG. Positions 160–173 are enriched in low complexity; that stretch reads AAGEAGAAGEAGAA. Positions 174 to 211 are enriched in gly residues; that stretch reads GEAGGAGEAGGAGEAGGAGEEGGTGEEGGAGEAGGAGE. The span at 449–461 shows a compositional bias: low complexity; the sequence is PAAAQASPAQGDA. Acidic residues-rich tracts occupy residues 462–473 and 556–566; these read SEADPGAEDADE and EESENEDEDGA.

The protein is Paraneoplastic antigen Ma6F of Homo sapiens (Human).